The chain runs to 355 residues: Peptide chain release factor 1 (355 aa).

Gln-233 is subject to N5-methylglutamine.

Belongs to the prokaryotic/mitochondrial release factor family. Methylated by PrmC. Methylation increases the termination efficiency of RF1.

The protein localises to the cytoplasm. In terms of biological role, peptide chain release factor 1 directs the termination of translation in response to the peptide chain termination codons UAG and UAA. This chain is Peptide chain release factor 1, found in Bacillus mycoides (strain KBAB4) (Bacillus weihenstephanensis).